Here is a 407-residue protein sequence, read N- to C-terminus: Phosphopentomutase (407 aa).

The Mn(2+) site is built by Asp-10, Asp-306, His-311, Asp-347, His-348, and His-359.

This sequence belongs to the phosphopentomutase family. Requires Mn(2+) as cofactor.

The protein resides in the cytoplasm. The enzyme catalyses 2-deoxy-alpha-D-ribose 1-phosphate = 2-deoxy-D-ribose 5-phosphate. It catalyses the reaction alpha-D-ribose 1-phosphate = D-ribose 5-phosphate. Its pathway is carbohydrate degradation; 2-deoxy-D-ribose 1-phosphate degradation; D-glyceraldehyde 3-phosphate and acetaldehyde from 2-deoxy-alpha-D-ribose 1-phosphate: step 1/2. Isomerase that catalyzes the conversion of deoxy-ribose 1-phosphate (dRib-1-P) and ribose 1-phosphate (Rib-1-P) to deoxy-ribose 5-phosphate (dRib-5-P) and ribose 5-phosphate (Rib-5-P), respectively. This is Phosphopentomutase from Sodalis glossinidius (strain morsitans).